Reading from the N-terminus, the 786-residue chain is Probable aminopeptidase 1 (786 aa).

Residues Glu-103 and 235 to 239 contribute to the substrate site; that span reads GAMEN. A Zn(2+)-binding site is contributed by His-270. The Proton acceptor role is filled by Glu-271. His-274 and Glu-293 together coordinate Zn(2+).

It belongs to the peptidase M1 family. Requires Zn(2+) as cofactor.

The protein resides in the cytoplasm. The chain is Probable aminopeptidase 1 (ape1) from Sulfurisphaera tokodaii (strain DSM 16993 / JCM 10545 / NBRC 100140 / 7) (Sulfolobus tokodaii).